Consider the following 390-residue polypeptide: Large ribosomal subunit protein mL44 (390 aa).

A mitochondrion-targeting transit peptide spans 1–59; it reads MGIVLKRAIAAGMKPFPNSTWHWSRTIRPFSQHLSSTCFLQQSSRFTSKRYLHLSTLTQ. The 67-residue stretch at 139 to 205 folds into the RNase III domain; it reads AFVNTVPTNK…LAHIAKYWGI (67 aa). Residues 302–372 enclose the DRBM domain; the sequence is QPTRELAMLC…ATDALMKWYC (71 aa).

This sequence belongs to the ribonuclease III family. Mitochondrion-specific ribosomal protein mL44 subfamily. Component of the mitochondrial large ribosomal subunit (mt-LSU). Mature yeast 74S mitochondrial ribosomes consist of a small (37S) and a large (54S) subunit. The 37S small subunit contains a 15S ribosomal RNA (15S mt-rRNA) and 34 different proteins. The 54S large subunit contains a 21S rRNA (21S mt-rRNA) and 46 different proteins. mL44 forms a heterodimer with mL57 and stabilizes rRNA expansion segments 1/2 at a membrane-facing protuberance close to the point of attachment of the ribosome to the translocon in the membrane.

The protein resides in the mitochondrion. Functionally, component of the mitochondrial ribosome (mitoribosome), a dedicated translation machinery responsible for the synthesis of mitochondrial genome-encoded proteins, including at least some of the essential transmembrane subunits of the mitochondrial respiratory chain. The mitoribosomes are attached to the mitochondrial inner membrane and translation products are cotranslationally integrated into the membrane. The chain is Large ribosomal subunit protein mL44 (MRPL3) from Saccharomyces cerevisiae (strain ATCC 204508 / S288c) (Baker's yeast).